Consider the following 52-residue polypeptide: MAVPKKRTSISKKRIRKQIWKRKGYWISLKAFSLGKSLSTGNSKSFFVQQNK.

The protein belongs to the bacterial ribosomal protein bL32 family.

It is found in the plastid. It localises to the chloroplast. The sequence is that of Large ribosomal subunit protein bL32c from Aethionema grandiflorum (Persian stone-cress).